We begin with the raw amino-acid sequence, 297 residues long: Probable endonuclease 4 (297 aa).

A disordered region spans residues 1 to 21 (MPEIGAHVSAAGGPQRAPERG). Histidine 67, histidine 107, glutamate 145, aspartate 179, histidine 182, histidine 216, aspartate 229, histidine 231, and glutamate 261 together coordinate Zn(2+).

This sequence belongs to the AP endonuclease 2 family. The cofactor is Zn(2+).

It catalyses the reaction Endonucleolytic cleavage to 5'-phosphooligonucleotide end-products.. Endonuclease IV plays a role in DNA repair. It cleaves phosphodiester bonds at apurinic or apyrimidinic (AP) sites, generating a 3'-hydroxyl group and a 5'-terminal sugar phosphate. The protein is Probable endonuclease 4 of Halorhodospira halophila (strain DSM 244 / SL1) (Ectothiorhodospira halophila (strain DSM 244 / SL1)).